A 778-amino-acid polypeptide reads, in one-letter code: Ent-trachylobane synthase KSL2, chloroplastic (778 aa).

Residues 1–37 (MLLTCTNSLKISSQAKEWESKTLTGMSLEQLNKRIRI) constitute a chloroplast transit peptide. Residues aspartate 529, aspartate 533, asparagine 672, aspartate 673, and aspartate 680 each coordinate Mg(2+). Positions 529–533 (DDFFD) match the DDXXD motif motif.

The protein belongs to the terpene synthase family. The cofactor is Mg(2+).

It is found in the plastid. The protein localises to the chloroplast. It carries out the reaction ent-copalyl diphosphate = ent-trachylobane + diphosphate. The enzyme catalyses ent-copalyl diphosphate = ent-kaur-16-ene + diphosphate. It participates in secondary metabolite biosynthesis; terpenoid biosynthesis. Functionally, diterpene cyclase involved in the biosynthesis of labdane-related diterpenoids (LRDs) natural products. Catalyzes the cyclization of ent-CDP into ent-trachylobane as a major and ent-kaurene as a minor product. In Ricinus communis (Castor bean), this protein is Ent-trachylobane synthase KSL2, chloroplastic.